Here is a 1465-residue protein sequence, read N- to C-terminus: Ankyrin and armadillo repeat-containing protein (1465 aa).

A helical transmembrane segment spans residues 313–329 (MGYLKLICFLIPFLLSL). ANK repeat units lie at residues 532-561 (AGYA…NVNQ), 582-611 (NGPT…DYTL), 615-644 (RGWM…SLLE), 651-680 (NQCT…NWRK), and 684-714 (KGNN…ELPV). ARM repeat units follow at residues 745–784 (DRYW…NIST), 786–825 (VSIV…DVAK), 827–865 (ENKD…VLCM), 868–907 (ESNQ…EVAR), 910–949 (KEVQ…SLAN), and 1085–1125 (PMSQ…CIVL). Residues 1431–1465 (KLGKDEQKANPDPPAFLNKLGKDEQNANPDPAESQ) form a disordered region.

It is found in the membrane. The polypeptide is Ankyrin and armadillo repeat-containing protein (Ankar) (Mus musculus (Mouse)).